We begin with the raw amino-acid sequence, 209 residues long: Tektin bundle-interacting protein 1 (209 aa).

In terms of assembly, microtubule inner protein component of sperm flagellar doublet microtubules.

The protein resides in the cytoplasm. The protein localises to the cytoskeleton. It is found in the cilium axoneme. It localises to the flagellum axoneme. In terms of biological role, microtubule inner protein (MIP) part of the dynein-decorated doublet microtubules (DMTs) in cilia axoneme, which is required for motile cilia beating. Located at the center of the tektin bundle where may function to recruit tektins or stabilize the bundle. This Macaca fascicularis (Crab-eating macaque) protein is Tektin bundle-interacting protein 1 (TEKTIP1).